A 623-amino-acid polypeptide reads, in one-letter code: Kelch repeat and BTB domain-containing protein 2 (623 aa).

A BTB domain is found at 31 to 98 (TDIVLIVEGT…AYTGNLAMND (68 aa)). Positions 133 to 229 (CVRLLSFADL…IRIDALSEVT (97 aa)) constitute a BACK domain. The residue at position 300 (S300) is a Phosphoserine. Kelch repeat units lie at residues 317-380 (DIYI…CCEG), 381-429 (YIYA…VVHD), 431-469 (IYVMTLNLMYCYFPRSDSWVEMAMRQTSRSFASAAAFGD), 470-529 (KIFY…RAVV), and 535-581 (CVFM…DFRC).

As to quaternary structure, component of the BCR(KBTBD2) E3 ubiquitin ligase complex, at least composed of CUL3, KBTBD2 and RBX1. Interacts (via the BTB domain) with CUL3.

It functions in the pathway protein modification; protein ubiquitination. Substrate-specific adapter of a BCR (BTB-CUL3-RBX1) E3 ubiquitin ligase complex that acts as a regulator of the insulin signaling pathway, modulating insulin sensitivity by limiting PIK3R1/p85alpha abundance in adipocytes. Targets PIK3R1, the regulatory subunit of phosphatidylinositol 3-kinase (PI3K), for 'Lys-48'-linked polyubiquitination and proteasome-mediated degradation. The chain is Kelch repeat and BTB domain-containing protein 2 from Homo sapiens (Human).